Here is a 219-residue protein sequence, read N- to C-terminus: Transmembrane protein 179B (219 aa).

4 helical membrane-spanning segments follow: residues 9-29, 65-85, 98-118, and 162-182; these read VELLLFTAAFLCGALAAATLT, FVAGASGILALYCLLLLFFWV, IGLRIALAISATAIFLILVSA, and LHTAETSSWVNLILWCLALLL. At serine 206 the chain carries Phosphoserine.

It belongs to the TMEM179 family.

It localises to the membrane. The sequence is that of Transmembrane protein 179B (Tmem179b) from Mus musculus (Mouse).